Here is a 188-residue protein sequence, read N- to C-terminus: GMP synthase [glutamine-hydrolyzing] subunit A (188 aa).

The 188-residue stretch at 1–188 (MIVILNNGGQ…FCKVCGLLGE (188 aa)) folds into the Glutamine amidotransferase type-1 domain. Cys-76 acts as the Nucleophile in catalysis. Active-site residues include His-163 and Glu-165.

In terms of assembly, heterodimer composed of a glutamine amidotransferase subunit (A) and a GMP-binding subunit (B).

It catalyses the reaction XMP + L-glutamine + ATP + H2O = GMP + L-glutamate + AMP + diphosphate + 2 H(+). It participates in purine metabolism; GMP biosynthesis; GMP from XMP (L-Gln route): step 1/1. Catalyzes the synthesis of GMP from XMP. This Methanococcus aeolicus (strain ATCC BAA-1280 / DSM 17508 / OCM 812 / Nankai-3) protein is GMP synthase [glutamine-hydrolyzing] subunit A.